A 366-amino-acid chain; its full sequence is Aminomethyltransferase (366 aa).

The protein belongs to the GcvT family. As to quaternary structure, the glycine cleavage system is composed of four proteins: P, T, L and H.

The enzyme catalyses N(6)-[(R)-S(8)-aminomethyldihydrolipoyl]-L-lysyl-[protein] + (6S)-5,6,7,8-tetrahydrofolate = N(6)-[(R)-dihydrolipoyl]-L-lysyl-[protein] + (6R)-5,10-methylene-5,6,7,8-tetrahydrofolate + NH4(+). Functionally, the glycine cleavage system catalyzes the degradation of glycine. This is Aminomethyltransferase from Bordetella petrii (strain ATCC BAA-461 / DSM 12804 / CCUG 43448).